Here is a 384-residue protein sequence, read N- to C-terminus: Spermidine/putrescine import ATP-binding protein PotA (384 aa).

In terms of domain architecture, ABC transporter spans 6–238 (ITFNNVSKTF…PINHFVANFI (233 aa)). ATP is bound at residue 40–47 (GASGSGKS).

The protein belongs to the ABC transporter superfamily. Spermidine/putrescine importer (TC 3.A.1.11.1) family. As to quaternary structure, the complex is composed of two ATP-binding proteins (PotA), two transmembrane proteins (PotB and PotC) and a solute-binding protein (PotD).

The protein localises to the cell membrane. The catalysed reaction is ATP + H2O + polyamine-[polyamine-binding protein]Side 1 = ADP + phosphate + polyamineSide 2 + [polyamine-binding protein]Side 1.. Functionally, part of the ABC transporter complex PotABCD involved in spermidine/putrescine import. Responsible for energy coupling to the transport system. The sequence is that of Spermidine/putrescine import ATP-binding protein PotA from Streptococcus pyogenes serotype M12 (strain MGAS2096).